The following is a 32-amino-acid chain: ATP synthase subunit O, mitochondrial (32 aa).

The protein belongs to the ATPase delta chain family. F-type ATPases have 2 components, CF(1) - the catalytic core - and CF(0) - the membrane proton channel. CF(1) has five subunits: alpha(3), beta(3), gamma(1), delta(1), epsilon(1). CF(0) has three main subunits: a, b and c.

Its subcellular location is the mitochondrion. The protein resides in the mitochondrion inner membrane. In terms of biological role, mitochondrial membrane ATP synthase (F(1)F(0) ATP synthase or Complex V) produces ATP from ADP in the presence of a proton gradient across the membrane which is generated by electron transport complexes of the respiratory chain. F-type ATPases consist of two structural domains, F(1) - containing the extramembraneous catalytic core and F(0) - containing the membrane proton channel, linked together by a central stalk and a peripheral stalk. During catalysis, ATP synthesis in the catalytic domain of F(1) is coupled via a rotary mechanism of the central stalk subunits to proton translocation. Part of the complex F(0) domain and the peripheric stalk, which acts as a stator to hold the catalytic alpha(3)beta(3) subcomplex and subunit a/ATP6 static relative to the rotary elements. The polypeptide is ATP synthase subunit O, mitochondrial (Spinacia oleracea (Spinach)).